The primary structure comprises 553 residues: Dihydroxy-acid dehydratase (553 aa).

Aspartate 78 provides a ligand contact to Mg(2+). Cysteine 119 contacts [2Fe-2S] cluster. Mg(2+) contacts are provided by aspartate 120 and lysine 121. An N6-carboxylysine modification is found at lysine 121. Residue cysteine 193 coordinates [2Fe-2S] cluster. Position 441 (glutamate 441) interacts with Mg(2+). The active-site Proton acceptor is the serine 467.

The protein belongs to the IlvD/Edd family. In terms of assembly, homodimer. It depends on [2Fe-2S] cluster as a cofactor. The cofactor is Mg(2+).

It catalyses the reaction (2R)-2,3-dihydroxy-3-methylbutanoate = 3-methyl-2-oxobutanoate + H2O. The catalysed reaction is (2R,3R)-2,3-dihydroxy-3-methylpentanoate = (S)-3-methyl-2-oxopentanoate + H2O. The protein operates within amino-acid biosynthesis; L-isoleucine biosynthesis; L-isoleucine from 2-oxobutanoate: step 3/4. It participates in amino-acid biosynthesis; L-valine biosynthesis; L-valine from pyruvate: step 3/4. In terms of biological role, functions in the biosynthesis of branched-chain amino acids. Catalyzes the dehydration of (2R,3R)-2,3-dihydroxy-3-methylpentanoate (2,3-dihydroxy-3-methylvalerate) into 2-oxo-3-methylpentanoate (2-oxo-3-methylvalerate) and of (2R)-2,3-dihydroxy-3-methylbutanoate (2,3-dihydroxyisovalerate) into 2-oxo-3-methylbutanoate (2-oxoisovalerate), the penultimate precursor to L-isoleucine and L-valine, respectively. This Pelobacter propionicus (strain DSM 2379 / NBRC 103807 / OttBd1) protein is Dihydroxy-acid dehydratase.